We begin with the raw amino-acid sequence, 249 residues long: 23S rRNA (guanosine-2'-O-)-methyltransferase RlmB (249 aa).

S-adenosyl-L-methionine contacts are provided by Gly-200, Ile-220, and Leu-229.

It belongs to the class IV-like SAM-binding methyltransferase superfamily. RNA methyltransferase TrmH family. RlmB subfamily.

It localises to the cytoplasm. The catalysed reaction is guanosine(2251) in 23S rRNA + S-adenosyl-L-methionine = 2'-O-methylguanosine(2251) in 23S rRNA + S-adenosyl-L-homocysteine + H(+). Functionally, specifically methylates the ribose of guanosine 2251 in 23S rRNA. The sequence is that of 23S rRNA (guanosine-2'-O-)-methyltransferase RlmB from Xylella fastidiosa (strain Temecula1 / ATCC 700964).